We begin with the raw amino-acid sequence, 313 residues long: Homeobox protein CDX-2 (313 aa).

A Phosphoserine modification is found at Ser-60. The disordered stretch occupies residues 113 to 153 (HAHHHPHHHPHHPAAAPSCASGLLQTLNPGPPGPAATGAAE). The span at 114–124 (AHHHPHHHPHH) shows a compositional bias: basic residues. The interaction with DNA stretch occupies residues 185–215 (KDKYRVVYTDHQRLELEKEFHYSRYITIRRK). A DNA-binding region (homeobox) is located at residues 185–244 (KDKYRVVYTDHQRLELEKEFHYSRYITIRRKAELAATLGLSERQVKIWFQNRRAKERKIN). The interaction with 5-mCpG DNA stretch occupies residues 227–241 (RQVKIWFQNRRAKER). Positions 242–313 (KINKKKLQQQ…GGVLNPTVTQ (72 aa)) are disordered. Composition is skewed to low complexity over residues 249–261 (QQQQQQQQQQQLA) and 271–300 (QPGSLRSVPEPLSPVSSLQGSVPGSVPGVL). Position 283 is a phosphoserine (Ser-283). Positions 283–295 (SPVSSLQGSVPGS) match the 4S motif; modulates transactivation activity and protein stability motif.

The protein belongs to the Caudal homeobox family. In terms of assembly, can bind DNA as a monomer or homodimer. Ubiquitinated, leading to its degradation by the proteasome. In terms of processing, phosphorylation at Ser-60 reduces transactivation capacity. Phosphorylation at Ser-283 reduces transactivation capacity and also increases ubiquitin-dependent proteasome degradation. As to expression, expressed in the intestine.

Its subcellular location is the nucleus. Transcription factor which regulates the transcription of multiple genes expressed in the intestinal epithelium. Binds to the promoter of the intestinal sucrase-isomaltase SI and activates SI transcription. Binds to the DNA sequence 5'-ATAAAAACTTAT-3' in the promoter region of VDR and activates VDR transcription. Binds to and activates transcription of LPH. Activates transcription of CLDN2 and intestinal mucin MUC2. Binds to the 5'-AATTTTTTACAACACCT-3' DNA sequence in the promoter region of CA1 and activates CA1 transcription. Important in broad range of functions from early differentiation to maintenance of the intestinal epithelial lining of both the small and large intestine. Binds preferentially to methylated DNA. This Mesocricetus auratus (Golden hamster) protein is Homeobox protein CDX-2 (CDX2).